The following is a 1364-amino-acid chain: DNA-directed RNA polymerase subunit beta' (1364 aa).

Zn(2+) contacts are provided by cysteine 250, cysteine 317, cysteine 324, and cysteine 327. The tract at residues 1318 to 1342 (TRHNIDPSASTNAAFTRPDVDNELK) is disordered.

It belongs to the RNA polymerase beta' chain family. RpoC2 subfamily. As to quaternary structure, in cyanobacteria the RNAP catalytic core is composed of 2 alpha, 1 beta, 1 beta', 1 gamma and 1 omega subunit. When a sigma factor is associated with the core the holoenzyme is formed, which can initiate transcription. The cofactor is Zn(2+).

It catalyses the reaction RNA(n) + a ribonucleoside 5'-triphosphate = RNA(n+1) + diphosphate. In terms of biological role, DNA-dependent RNA polymerase catalyzes the transcription of DNA into RNA using the four ribonucleoside triphosphates as substrates. In Synechococcus sp. (strain CC9902), this protein is DNA-directed RNA polymerase subunit beta'.